A 315-amino-acid chain; its full sequence is Protein OPG185 (315 aa).

The N-terminal stretch at M1–A16 is a signal peptide. The 105-residue stretch at T17–E121 folds into the Ig-like V-type domain. The Virion surface portion of the chain corresponds to T17–E279. A disulfide bond links C34 and C103. Residues N37, N69, N112, and N161 are each glycosylated (N-linked (GlcNAc...) asparagine; by host). The segment covering S191 to S202 has biased composition (polar residues). The disordered stretch occupies residues S191–D213. N-linked (GlcNAc...) asparagine; by host glycosylation occurs at N254. A helical transmembrane segment spans residues I280 to N303. Topologically, residues K304–V315 are intravirion.

The protein belongs to the orthopoxvirus OPG185 family. Heterodimerizes with OPG040. The heterodimer OPG185-OPG040 interacts with components of the entry fusion complex OPG143 and OPG094. Heterodimer with C3/VPC protein; disulfide-linked. Post-translationally, glycosylated; contains phosphate and sulfate-substituted glycans. O-glycosylation is required for hemagglutination and hemadsorption activities of infected cell membranes.

The protein resides in the virion membrane. It is found in the host membrane. Its function is as follows. Prevents cell to cell fusion by interacting with and directing the viral OPG040 protein on the host plasma membrane. The OPG185-OPG040 complex associates with components of the entry fusion complex (EFC) presumably to avoid superinfection and syncytium formation. Via its interaction with C3/VCP protein, protects the infected cell and probably also the extracellular enveloped virus from complement attack. This is Protein OPG185 (OPG185) from Homo sapiens (Human).